The primary structure comprises 320 residues: MTAPQKHNLFSPEPHYIPGYAGFYPQLRYRVGDTYGRTTAQLLTDPSVQKSPCSVLAPVAKPKFIEDFSKPKPPFVPCRDLIEPYIPHYTGLKPYKNFEMLGRFPPQEADAQGSLGGENVSRQVPLPAGFMPYPPYAPCPPGRKGDSRDLGHPGLRLALGEEAWKSTAPACEAPGQYQLYHCRRDESPPLAHWQETLDVGRFHRLPQLGHPKLIQRKAISGYAGFVPRFAWVMGMNYRDGVTQAMDEFDKSQFLLRNPICALGERLPSTHWPSNTIYRSQGLIPFYMGFIPSMQDNYALTFGNSTRKAYQKELERRSRTL.

This sequence belongs to the CIMIP2 family. As to quaternary structure, microtubule inner protein component of sperm flagellar doublet microtubules. As to expression, expressed in sperm.

The protein resides in the cytoplasm. Its subcellular location is the cytoskeleton. It is found in the flagellum axoneme. Microtubule inner protein (MIP) part of the dynein-decorated doublet microtubules (DMTs) in flagellum axoneme. Binds to the intra-tubulin interfaces. The protein is Ciliary microtubule inner protein 2A (CIMIP2A) of Bos taurus (Bovine).